The following is a 126-amino-acid chain: Large ribosomal subunit protein bL12 (126 aa).

It belongs to the bacterial ribosomal protein bL12 family. As to quaternary structure, homodimer. Part of the ribosomal stalk of the 50S ribosomal subunit. Forms a multimeric L10(L12)X complex, where L10 forms an elongated spine to which 2 to 4 L12 dimers bind in a sequential fashion. Binds GTP-bound translation factors.

Forms part of the ribosomal stalk which helps the ribosome interact with GTP-bound translation factors. Is thus essential for accurate translation. In Rhizobium meliloti (strain 1021) (Ensifer meliloti), this protein is Large ribosomal subunit protein bL12.